The primary structure comprises 357 residues: DENN domain-containing protein 10 (357 aa).

Residues 1-140 enclose the uDENN domain; that stretch reads MAAAEVADTQ…TKGICQSEEN (140 aa). The cDENN domain occupies 165 to 299; sequence QFGMETVILH…PEKSESHVIQ (135 aa). The dDENN domain occupies 301–357; that stretch reads IALKTREIFTNLAPFSEVSADGEKRVLNLEALKQKRFPPATENFLYHLAAAEQMLKI.

This sequence belongs to the DENND10 family. Interacts with the coiled-coil heterodimer of CCDC22 and CCDC93; the interaction is direct. Interacts with RAB27A and RAB27B (GDP-bound forms preferentially).

It is found in the late endosome. In terms of biological role, guanine nucleotide exchange factor (GEF) regulating homeostasis of late endocytic pathway, including endosomal positioning, maturation and secretion, possibly through activating Rab proteins such as RAB27A and RAB27B. Promotes the exchange of GDP to GTP, converting inactive GDP-bound RAB27A and RAB27B into their active GTP-bound form. The sequence is that of DENN domain-containing protein 10 from Homo sapiens (Human).